The following is a 385-amino-acid chain: 4-hydroxy-3-methylbut-2-en-1-yl diphosphate synthase (flavodoxin) (385 aa).

4 residues coordinate [4Fe-4S] cluster: Cys280, Cys283, Cys315, and Glu322.

Belongs to the IspG family. [4Fe-4S] cluster is required as a cofactor.

The catalysed reaction is (2E)-4-hydroxy-3-methylbut-2-enyl diphosphate + oxidized [flavodoxin] + H2O + 2 H(+) = 2-C-methyl-D-erythritol 2,4-cyclic diphosphate + reduced [flavodoxin]. Its pathway is isoprenoid biosynthesis; isopentenyl diphosphate biosynthesis via DXP pathway; isopentenyl diphosphate from 1-deoxy-D-xylulose 5-phosphate: step 5/6. Functionally, converts 2C-methyl-D-erythritol 2,4-cyclodiphosphate (ME-2,4cPP) into 1-hydroxy-2-methyl-2-(E)-butenyl 4-diphosphate. This chain is 4-hydroxy-3-methylbut-2-en-1-yl diphosphate synthase (flavodoxin), found in Streptomyces griseus subsp. griseus (strain JCM 4626 / CBS 651.72 / NBRC 13350 / KCC S-0626 / ISP 5235).